A 421-amino-acid chain; its full sequence is Structure-specific endonuclease subunit SLX1 (421 aa).

The GIY-YIG domain occupies 13–95 (AFYCCYLLRS…QHTKESRHAE (83 aa)). 2 disordered regions span residues 34–57 (TPEPSRRLAQHNGDRTGGARKTSS) and 96–120 (VERCESEQLGTRGSSRTGKEVKRAG). The segment at 225–280 (CGVCKQRLNPRNDMIAICSHSLCRCASHLLCLSAHFLEAAGFIGKLIPKEGTCPAC) adopts an SLX1-type zinc-finger fold. A compositionally biased stretch (basic residues) spans 310–322 (RRRTEQVGKRKIS). Residues 310 to 339 (RRRTEQVGKRKISNHVSSEKGESEASMPST) are disordered.

This sequence belongs to the SLX1 family. In terms of assembly, forms a heterodimer with SLX4. A divalent metal cation serves as cofactor.

The protein localises to the nucleus. Its function is as follows. Catalytic subunit of the SLX1-SLX4 structure-specific endonuclease that resolves DNA secondary structures generated during DNA repair and recombination. Has endonuclease activity towards branched DNA substrates, introducing single-strand cuts in duplex DNA close to junctions with ss-DNA. The protein is Structure-specific endonuclease subunit SLX1 of Ajellomyces capsulatus (strain G186AR / H82 / ATCC MYA-2454 / RMSCC 2432) (Darling's disease fungus).